The chain runs to 478 residues: uncharacterized protein (478 aa).

The first 19 residues, 1–19, serve as a signal peptide directing secretion; that stretch reads MKLFPLCLSALVMSTATCA. At 20 to 214 the chain is on the lumenal side; sequence SSVEGAIEKV…VPVTLKLQRQ (195 aa). A helical membrane pass occupies residues 215–235; sequence IFLSFSIVYGLISLWWAIRCI. Topologically, residues 236 to 240 are cytoplasmic; that stretch reads CSRTK. The chain crosses the membrane as a helical span at residues 241–261; that stretch reads LHLVQVCLFCWFSFFILNHPV. The Lumenal segment spans residues 262–289; sequence KQRIFSIDNPDEYLVPFVVSCFTYFLGD. Residues 290–310 traverse the membrane as a helical segment; the sequence is GIEYALYSLFITTTVLGFGTI. The Cytoplasmic portion of the chain corresponds to 311-317; the sequence is RRTSKKM. Residues 318–338 form a helical membrane-spanning segment; the sequence is VLFFSLLTCGQAFLVNVAPMV. Residues 339–356 lie on the Lumenal side of the membrane; it reads YPLLYISGSDKACVLRMV. A helical membrane pass occupies residues 357 to 377; the sequence is WVFNKFLYLPLITFLGAVLAF. Residues 378-391 lie on the Cytoplasmic side of the membrane; it reads RFRLKKASQFDTRW. Residues 392–412 form a helical membrane-spanning segment; that stretch reads NLFALTLAIIILFAFNDLVIF. At 413–427 the chain is on the lumenal side; that stretch reads DKLQKLWKYDDTTLE. Residues 428–448 traverse the membrane as a helical segment; the sequence is YLKIVNGGIKFVAFSILLGPY. The Cytoplasmic segment spans residues 449–478; sequence SKLFAEPKSLQLDDFLGKHDGHKDPSLEKF.

It is found in the endoplasmic reticulum membrane. It localises to the golgi apparatus membrane. This is an uncharacterized protein from Schizosaccharomyces pombe (strain 972 / ATCC 24843) (Fission yeast).